A 161-amino-acid chain; its full sequence is Putative 4-hydroxy-4-methyl-2-oxoglutarate aldolase (161 aa).

Residues 77 to 80 (GGNL) and Arg-99 each bind substrate. Position 100 (Asp-100) interacts with a divalent metal cation.

This sequence belongs to the class II aldolase/RraA-like family. As to quaternary structure, homotrimer. It depends on a divalent metal cation as a cofactor.

The enzyme catalyses 4-hydroxy-4-methyl-2-oxoglutarate = 2 pyruvate. It carries out the reaction oxaloacetate + H(+) = pyruvate + CO2. Its function is as follows. Catalyzes the aldol cleavage of 4-hydroxy-4-methyl-2-oxoglutarate (HMG) into 2 molecules of pyruvate. Also contains a secondary oxaloacetate (OAA) decarboxylase activity due to the common pyruvate enolate transition state formed following C-C bond cleavage in the retro-aldol and decarboxylation reactions. The polypeptide is Putative 4-hydroxy-4-methyl-2-oxoglutarate aldolase (Methylococcus capsulatus (strain ATCC 33009 / NCIMB 11132 / Bath)).